Reading from the N-terminus, the 75-residue chain is Neuropeptide-like protein 31 (75 aa).

A signal peptide spans 1–22; it reads MISTSSILVLVVLLACFMAANA. A tyrosine amide mark is found at Tyr29, Tyr39, Tyr49, Tyr56, and Tyr64. The residue at position 73 (Trp73) is a Tryptophan amide.

The protein belongs to the YARP (YGGW-amide related peptide) family. In terms of tissue distribution, expressed in hypoderm.

It is found in the secreted. Antimicrobial peptides that have antifungal activity against D.coniospora. Has weak antibacterial activity against Gram-positive bacteria M.luteus and Gram-negative E.coli. In Caenorhabditis elegans, this protein is Neuropeptide-like protein 31 (nlp-31).